The chain runs to 622 residues: Chaperone protein HscA homolog (622 aa).

This sequence belongs to the heat shock protein 70 family.

Functionally, chaperone involved in the maturation of iron-sulfur cluster-containing proteins. Has a low intrinsic ATPase activity which is markedly stimulated by HscB. The polypeptide is Chaperone protein HscA homolog (Acidovorax ebreus (strain TPSY) (Diaphorobacter sp. (strain TPSY))).